Consider the following 119-residue polypeptide: Large ribosomal subunit protein bL20 (119 aa).

This sequence belongs to the bacterial ribosomal protein bL20 family.

Binds directly to 23S ribosomal RNA and is necessary for the in vitro assembly process of the 50S ribosomal subunit. It is not involved in the protein synthesizing functions of that subunit. The polypeptide is Large ribosomal subunit protein bL20 (Metamycoplasma arthritidis (strain 158L3-1) (Mycoplasma arthritidis)).